We begin with the raw amino-acid sequence, 377 residues long: Anhydro-N-acetylmuramic acid kinase (377 aa).

12–19 (GTSLDGID) provides a ligand contact to ATP.

It belongs to the anhydro-N-acetylmuramic acid kinase family.

It carries out the reaction 1,6-anhydro-N-acetyl-beta-muramate + ATP + H2O = N-acetyl-D-muramate 6-phosphate + ADP + H(+). It functions in the pathway amino-sugar metabolism; 1,6-anhydro-N-acetylmuramate degradation. It participates in cell wall biogenesis; peptidoglycan recycling. In terms of biological role, catalyzes the specific phosphorylation of 1,6-anhydro-N-acetylmuramic acid (anhMurNAc) with the simultaneous cleavage of the 1,6-anhydro ring, generating MurNAc-6-P. Is required for the utilization of anhMurNAc either imported from the medium or derived from its own cell wall murein, and thus plays a role in cell wall recycling. In Methylorubrum populi (strain ATCC BAA-705 / NCIMB 13946 / BJ001) (Methylobacterium populi), this protein is Anhydro-N-acetylmuramic acid kinase.